The following is a 339-amino-acid chain: tRNA(Ile)-lysidine synthase (339 aa).

ATP is bound at residue 34–39 (SGGPDS).

Belongs to the tRNA(Ile)-lysidine synthase family.

It is found in the cytoplasm. It catalyses the reaction cytidine(34) in tRNA(Ile2) + L-lysine + ATP = lysidine(34) in tRNA(Ile2) + AMP + diphosphate + H(+). Ligates lysine onto the cytidine present at position 34 of the AUA codon-specific tRNA(Ile) that contains the anticodon CAU, in an ATP-dependent manner. Cytidine is converted to lysidine, thus changing the amino acid specificity of the tRNA from methionine to isoleucine. The polypeptide is tRNA(Ile)-lysidine synthase (Methylobacterium nodulans (strain LMG 21967 / CNCM I-2342 / ORS 2060)).